The following is a 445-amino-acid chain: Tubulin beta chain (445 aa).

Positions 11, 69, 138, 142, 143, 144, 204, and 226 each coordinate GTP. E69 contacts Mg(2+).

The protein belongs to the tubulin family. Dimer of alpha and beta chains. A typical microtubule is a hollow water-filled tube with an outer diameter of 25 nm and an inner diameter of 15 nM. Alpha-beta heterodimers associate head-to-tail to form protofilaments running lengthwise along the microtubule wall with the beta-tubulin subunit facing the microtubule plus end conferring a structural polarity. Microtubules usually have 13 protofilaments but different protofilament numbers can be found in some organisms and specialized cells. Mg(2+) serves as cofactor.

The protein resides in the cytoplasm. The protein localises to the cytoskeleton. Tubulin is the major constituent of microtubules, a cylinder consisting of laterally associated linear protofilaments composed of alpha- and beta-tubulin heterodimers. Microtubules grow by the addition of GTP-tubulin dimers to the microtubule end, where a stabilizing cap forms. Below the cap, tubulin dimers are in GDP-bound state, owing to GTPase activity of alpha-tubulin. The polypeptide is Tubulin beta chain (TUB-2) (Schizophyllum commune (Split gill fungus)).